A 159-amino-acid chain; its full sequence is Large ribosomal subunit protein uL13 (159 aa).

It belongs to the universal ribosomal protein uL13 family. As to quaternary structure, part of the 50S ribosomal subunit.

Functionally, this protein is one of the early assembly proteins of the 50S ribosomal subunit, although it is not seen to bind rRNA by itself. It is important during the early stages of 50S assembly. The sequence is that of Large ribosomal subunit protein uL13 from Methanopyrus kandleri (strain AV19 / DSM 6324 / JCM 9639 / NBRC 100938).